Consider the following 317-residue polypeptide: Dehydrogenase/reductase SDR family member 12 (317 aa).

Serine 50 and isoleucine 52 together coordinate NAD(+). Residue serine 175 coordinates substrate. NAD(+) is bound by residues tyrosine 201, lysine 205, and threonine 234. Catalysis depends on tyrosine 201, which acts as the Proton acceptor.

This sequence belongs to the short-chain dehydrogenases/reductases (SDR) family.

Its function is as follows. Putative oxidoreductase. The sequence is that of Dehydrogenase/reductase SDR family member 12 (DHRS12) from Bos taurus (Bovine).